The following is a 544-amino-acid chain: Chaperonin GroEL (544 aa).

ATP is bound by residues Thr29–Pro32, Asp86–Thr90, Gly413, Asn476–Ala478, and Asp492.

This sequence belongs to the chaperonin (HSP60) family. In terms of assembly, forms a cylinder of 14 subunits composed of two heptameric rings stacked back-to-back. Interacts with the co-chaperonin GroES.

The protein resides in the cytoplasm. It carries out the reaction ATP + H2O + a folded polypeptide = ADP + phosphate + an unfolded polypeptide.. Its function is as follows. Together with its co-chaperonin GroES, plays an essential role in assisting protein folding. The GroEL-GroES system forms a nano-cage that allows encapsulation of the non-native substrate proteins and provides a physical environment optimized to promote and accelerate protein folding. This Bacillus licheniformis (strain ATCC 14580 / DSM 13 / JCM 2505 / CCUG 7422 / NBRC 12200 / NCIMB 9375 / NCTC 10341 / NRRL NRS-1264 / Gibson 46) protein is Chaperonin GroEL.